The sequence spans 101 residues: Small ribosomal subunit protein uS10 (101 aa).

Belongs to the universal ribosomal protein uS10 family. Part of the 30S ribosomal subunit.

Involved in the binding of tRNA to the ribosomes. The protein is Small ribosomal subunit protein uS10 of Cytophaga hutchinsonii (strain ATCC 33406 / DSM 1761 / CIP 103989 / NBRC 15051 / NCIMB 9469 / D465).